Here is a 179-residue protein sequence, read N- to C-terminus: uncharacterized protein (179 aa).

The protein resides in the virion. This is an uncharacterized protein from Acanthamoeba polyphaga (Amoeba).